Here is a 206-residue protein sequence, read N- to C-terminus: LexA repressor (206 aa).

Positions 28-48 (RAEIARRLGFKSANAAEEHLK) form a DNA-binding region, H-T-H motif. Active-site for autocatalytic cleavage activity residues include Ser123 and Lys160.

This sequence belongs to the peptidase S24 family. Homodimer.

It catalyses the reaction Hydrolysis of Ala-|-Gly bond in repressor LexA.. Its function is as follows. Represses a number of genes involved in the response to DNA damage (SOS response), including recA and lexA. In the presence of single-stranded DNA, RecA interacts with LexA causing an autocatalytic cleavage which disrupts the DNA-binding part of LexA, leading to derepression of the SOS regulon and eventually DNA repair. The polypeptide is LexA repressor (Shewanella halifaxensis (strain HAW-EB4)).